Consider the following 282-residue polypeptide: DNA-directed RNA polymerase III subunit RPC5 (282 aa).

The segment at methionine 1–valine 70 is disordered. 2 stretches are compositionally biased toward acidic residues: residues threonine 10–alanine 35 and aspartate 60–valine 70. The residue at position 61 (threonine 61) is a Phosphothreonine.

Component of the RNA polymerase III (Pol III) complex consisting of 17 subunits. Interacts with RPC53/RPC4. RPC53/RPC4, RPC37/RPC5 and RPC11/RPC10 probably form a Pol III subcomplex.

It localises to the nucleus. In terms of biological role, DNA-dependent RNA polymerase catalyzes the transcription of DNA into RNA using the four ribonucleoside triphosphates as substrates. Specific peripheric component of RNA polymerase III which synthesizes small RNAs, such as 5S rRNA and tRNAs. The RPC53/RPC4-RPC37/RPC5 subcomplex is required for terminator recognition and reinitiation. This is DNA-directed RNA polymerase III subunit RPC5 (RPC37) from Saccharomyces cerevisiae (strain ATCC 204508 / S288c) (Baker's yeast).